A 687-amino-acid polypeptide reads, in one-letter code: Adhesion G-protein coupled receptor G1 (687 aa).

An N-terminal signal peptide occupies residues 1–25 (MTAQSLLQTTLFLLSLLFLVQGAHG). 26–33 (RGHREDFR) contacts heparin. Residues 26–402 (RGHREDFRFC…VEVDAVHKHY (377 aa)) lie on the Extracellular side of the membrane. Cystine bridges form between Cys35–Cys91 and Cys121–Cys177. N-linked (GlcNAc...) asparagine glycosylation is found at Asn39, Asn148, Asn156, and Asn171. 190 to 200 (LKHPQKASRRP) is a binding site for heparin. One can recognise a GAIN-B domain in the interval 224–395 (DTVSFEEDRV…AVLMVSSVEV (172 aa)). 4 N-linked (GlcNAc...) asparagine glycosylation sites follow: Asn234, Asn303, Asn324, and Asn341. 2 disulfides stabilise this stretch: Cys346-Cys377 and Cys366-Cys379. The interval 346–395 (CVFWVEDPTLSNPGRWSSAGCETVRRETQTSCFCNHLTYFAVLMVSSVEV) is GPS. Positions 384–397 (YFAVLMVSSVEVDA) are stachel. A helical membrane pass occupies residues 403–423 (LSLLSYVGCVVSALACVVTIA). At 424-442 (AYLCSRRKPRDYTIKVHMN) the chain is on the cytoplasmic side. Residues 443–463 (LLLAVFLLDVSFLLSEPVALT) traverse the membrane as a helical segment. Residues 464-470 (GSQSGCR) lie on the Extracellular side of the membrane. Residues 471-491 (ASAIFLHFSLLACLSWMGLEG) traverse the membrane as a helical segment. Residues 492–512 (YNLYRLVVEVFGTYIPGYLLK) lie on the Cytoplasmic side of the membrane. The helical transmembrane segment at 513-533 (LSAMGWGFPIFLVTLVALVDV) threads the bilayer. The Extracellular portion of the chain corresponds to 534-570 (DNYGPIILAVHRTPESVIYPSMCWIRDSLVSYITNLG). Residues 571-591 (LFSLVFLFNMAMLGTMVVQIL) form a helical membrane-spanning segment. At 592–603 (RLRPHTQKWSHV) the chain is on the cytoplasmic side. A helical membrane pass occupies residues 604 to 624 (LTLLGLSLVLGLPWALIFFSF). Topologically, residues 625-630 (ASGTFQ) are extracellular. A helical transmembrane segment spans residues 631-651 (LVVLYLFSIITSFQGFLIFLW). Residues 652-687 (YWSMRLQARGGPSPLKSNSDSARLPISTGSTSSSRI) lie on the Cytoplasmic side of the membrane. The segment at 664–687 (SPLKSNSDSARLPISTGSTSSSRI) is disordered. A compositionally biased stretch (polar residues) spans 666 to 687 (LKSNSDSARLPISTGSTSSSRI).

This sequence belongs to the G-protein coupled receptor 2 family. LN-TM7 subfamily. As to quaternary structure, heterodimer of 2 chains generated by proteolytic processing; the large extracellular N-terminal fragment (ADGRG1 NT) and the membrane-bound C-terminal fragment (ADGRG1-CT) predominantly remain associated and non-covalently linked. ADGRG1 NT self-associates in a trans-trans manner; the homophilic interaction enhances receptor signaling. Interacts with TGM2. Interacts with heparin; leading to the reduction of ADGRG1 shedding. Interacts with COL3A1. Part of a GPCR-tetraspanin complex at least consisting of ADGRG1, CD81, eventually CD9, and GNA11 in which CD81 is enhancing the association of ADGRG1 with GNA11. In terms of processing, autoproteolytically cleaved into 2 fragments; the large extracellular N-terminal fragment (ADGRG1 NT) and the membrane-bound C-terminal fragment (ADGRG1 CT) predominantly remain associated and non-covalently linked. Shedding to yield the secreted ADGRG1 N-terminal fragment seems to involve metalloprotease(s). Post-translationally, ubiquitinated. Undergoes polyubiquitination upon activation.

It localises to the cell membrane. The protein resides in the secreted. It is found in the membrane raft. Forms a heterodimer of 2 chains generated by proteolytic processing that remain associated through non-covalent interactions mediated by the GAIN-B domain. In the inactivated receptor, the Stachel sequence (also named stalk) is embedded in the GAIN-B domain, where it adopts a beta-strand conformation. On activation, the Stachel moves into the 7 transmembrane region and adopts a twisted hook-shaped configuration that forms contacts within the receptor, leading to coupling of a G-alpha protein, which activates signaling. The cleaved GAIN-B and N-terminal domains can then dissociate from the rest of the receptor. Its function is as follows. Adhesion G-protein coupled receptor (aGPCR) for steroid hormone 17alpha-hydroxypregnenolone (17-OH), which is involved in cell adhesion and cell-cell interactions. Ligand binding causes a conformation change that triggers signaling via guanine nucleotide-binding proteins (G proteins) and modulates the activity of downstream effectors, such as RhoA pathway. ADGRG1 is coupled to G(12) and/or G(13) G proteins (GNA12 and GNA13, respectively) and mediates the activation Rho small GTPases. Acts as a potent suppressor of ferroptosis: binding to 17-OH-binding initiates signaling that down-regulates CD36 and alleviates ferroptosis-induced liver injury. Ligand-binding also induces cell adhesion activity via association with proteins such as collagen III/COL3A1 and TGM2. Mediates cell matrix adhesion in developing neurons and hematopoietic stem cells. Involved in cortical development, specifically in maintenance of the pial basement membrane integrity and in cortical lamination: association with COL3A1 in the developing brain inhibits neuronal migration via activation of the RhoA pathway. Together with TGM2, acts as a regulator of myelination and myelin repair in oligodendrocyte precursor cells. Acts as a hemostatic sensor of shear force: G protein-coupled receptor signaling is activated in response to shear force in platelets, promoting G(13) G protein signaling, and platelet shape change and aggregation in a COL3A1-dependent manner. Acts as an inhibitor of VEGFA production thereby inhibiting angiogenesis through a signaling pathway mediated by PRKCA. Plays a role in the maintenance of hematopoietic stem cells in bone marrow niche. Plays an essential role in testis development. The chain is Adhesion G-protein coupled receptor G1 (ADGRG1) from Macaca mulatta (Rhesus macaque).